The sequence spans 197 residues: Probable adenylyl-sulfate kinase (197 aa).

Position 33–40 (33–40 (GLSGSGKS)) interacts with ATP. The Phosphoserine intermediate role is filled by serine 107.

Belongs to the APS kinase family.

The enzyme catalyses adenosine 5'-phosphosulfate + ATP = 3'-phosphoadenylyl sulfate + ADP + H(+). The protein operates within sulfur metabolism; hydrogen sulfide biosynthesis; sulfite from sulfate: step 2/3. Functionally, catalyzes the synthesis of activated sulfate. The protein is Probable adenylyl-sulfate kinase (cysC) of Bacillus subtilis (strain 168).